The primary structure comprises 233 residues: uncharacterized protein (233 aa).

Helical transmembrane passes span 4–24 (LAIL…NHDT), 35–55 (FGQL…ILQS), and 66–86 (IAIW…RFEL).

The protein resides in the cell membrane. This is an uncharacterized protein from Sinorhizobium sp.